Reading from the N-terminus, the 500-residue chain is L-arabinose isomerase (500 aa).

Mn(2+) is bound by residues Glu306, Glu331, His348, and His447.

It belongs to the arabinose isomerase family. Mn(2+) serves as cofactor.

It catalyses the reaction beta-L-arabinopyranose = L-ribulose. The protein operates within carbohydrate degradation; L-arabinose degradation via L-ribulose; D-xylulose 5-phosphate from L-arabinose (bacterial route): step 1/3. Functionally, catalyzes the conversion of L-arabinose to L-ribulose. The sequence is that of L-arabinose isomerase from Anoxybacillus flavithermus (strain DSM 21510 / WK1).